Reading from the N-terminus, the 336-residue chain is Phosphate acyltransferase (336 aa).

It belongs to the PlsX family. As to quaternary structure, homodimer. Probably interacts with PlsY.

The protein resides in the cytoplasm. It catalyses the reaction a fatty acyl-[ACP] + phosphate = an acyl phosphate + holo-[ACP]. It participates in lipid metabolism; phospholipid metabolism. In terms of biological role, catalyzes the reversible formation of acyl-phosphate (acyl-PO(4)) from acyl-[acyl-carrier-protein] (acyl-ACP). This enzyme utilizes acyl-ACP as fatty acyl donor, but not acyl-CoA. In Pseudomonas paraeruginosa (strain DSM 24068 / PA7) (Pseudomonas aeruginosa (strain PA7)), this protein is Phosphate acyltransferase.